The chain runs to 453 residues: Glutamyl-tRNA(Gln) amidotransferase subunit A (453 aa).

Residues lysine 56 and serine 131 each act as charge relay system in the active site. Serine 155 acts as the Acyl-ester intermediate in catalysis.

This sequence belongs to the amidase family. GatA subfamily. In terms of assembly, heterotrimer of A, B and C subunits.

The catalysed reaction is L-glutamyl-tRNA(Gln) + L-glutamine + ATP + H2O = L-glutaminyl-tRNA(Gln) + L-glutamate + ADP + phosphate + H(+). In terms of biological role, allows the formation of correctly charged Gln-tRNA(Gln) through the transamidation of misacylated Glu-tRNA(Gln) in organisms which lack glutaminyl-tRNA synthetase. The reaction takes place in the presence of glutamine and ATP through an activated gamma-phospho-Glu-tRNA(Gln). The protein is Glutamyl-tRNA(Gln) amidotransferase subunit A of Campylobacter jejuni subsp. doylei (strain ATCC BAA-1458 / RM4099 / 269.97).